A 294-amino-acid polypeptide reads, in one-letter code: MKIIAKGKVKDVYDDGDTLVFRFSNRISVFDKIIPTEIENKGESLCRTSSFWFRYIGERGIKNHFIEMIDNRTMRVRKYDVPEKVSPGSSGYVIPLEFITRHYVAGSLYDRLKAGSTKPADIGLNHFPDYGEKLPSPVFEVTTKREKTDRLLDIDEALEISGLTREEYAEIRETILKIDEMMEQEVGKRGLIHADGKKEVALGKEREPIIVDTFGTADEDRFWEKKEYDAGRIVELSKEMVRQYYRSTGYHDRLYEARSRGMPEPDIPPLPEDMARKVSDLYKTMYERITGQKW.

Belongs to the SAICAR synthetase family.

It catalyses the reaction 5-amino-1-(5-phospho-D-ribosyl)imidazole-4-carboxylate + L-aspartate + ATP = (2S)-2-[5-amino-1-(5-phospho-beta-D-ribosyl)imidazole-4-carboxamido]succinate + ADP + phosphate + 2 H(+). It participates in purine metabolism; IMP biosynthesis via de novo pathway; 5-amino-1-(5-phospho-D-ribosyl)imidazole-4-carboxamide from 5-amino-1-(5-phospho-D-ribosyl)imidazole-4-carboxylate: step 1/2. The chain is Phosphoribosylaminoimidazole-succinocarboxamide synthase from Thermoplasma acidophilum (strain ATCC 25905 / DSM 1728 / JCM 9062 / NBRC 15155 / AMRC-C165).